The sequence spans 108 residues: Protein phosphatase 1 regulatory subunit 1C (108 aa).

The disordered stretch occupies residues Ala25–His108. The segment covering Asn45–Val54 has biased composition (basic and acidic residues). Residues Thr55 to Tyr73 show a composition bias toward polar residues. Basic and acidic residues predominate over residues Ala99–His108.

It belongs to the protein phosphatase inhibitor 1 family.

Its subcellular location is the cytoplasm. May increase cell susceptibility to TNF-induced apoptosis. The sequence is that of Protein phosphatase 1 regulatory subunit 1C (Ppp1r1c) from Mus musculus (Mouse).